The sequence spans 997 residues: MAVAGFVFCWPLLGLTIVLLVAPIDAAQRHTASDNPSTYNIGGVLSNSDSEEHFSTTIKHLNFDQQYVPRKVTYYDKTIRMDKNPIKTVFNVCDKLIENRVYAVVVSHEQTSGDLSPAAVSYTSGFYSIPVIGISSRDAAFSDKNIHVSFLRTVPPYYHQADVWLEMLSHFAYTKVIIIHSSDTDGRAILGRFQTTSQTYYDDVDVRATVELIVEFEPKLESFTEHLIDMKTAQSRVYLMYASTEDAQVIFRDAGEYNMTGEGHVWIVTEQALFSNNTPDGVLGLQLEHAHSDKGHIRDSVYVLASAIKEMISNETIAEAPKDCGDSAVNWESGKRLFQYLKSRNITGETGQVAFDDNGDRIYAGYDVINIREQQKKHVVGKFSYDSMRAKMRMRINDSEIIWPGKQRRKPEGIMIPTHLKLLTIEEKPFVYVRRMGDDEFRCEPDERPCPLFNNSDATANEFCCRGYCIDLLIELSKRINFTYDLALSPDGQFGHYILRNSTGAMTLRKEWTGLIGELVNERADMIVAPLTINPERAEYIEFSKPFKYQGITILEKKPSRSSTLVSFLQPFSNTLWILVMVSVHVVALVLYLLDRFSPFGRFKLSHSDSNEEKALNLSSAVWFAWGVLLNSGIGEGTPRSFSARVLGMVWAGFAMIIVASYTANLAAFLVLERPKTKLSGINDARLRNTMENLTCATVKGSSVDMYFRRQVELSNMYRTMEANNYATAEQAIQDVKKGKLMAFIWDSSRLEYEASKDCELVTAGELFGRSGYGIGLQKGSPWTDAVTLAILEFHESGFMEKLDKQWIFHGHVQQNCELFEKTPNTLGLKNMAGVFILVGVGIAGGVGLIIIEVIYKKHQVKKQKRLDIARHAADKWRGTIEKRKTIRASLAMQRQYNVGLNSTHAPGTISLAVDKRRYPRLGQRLGPERAWPGDAADVLRIRRPYELGKPGQSPKVIATNQPGMPMPMLGKTRPQQSVLPPRYSPGYTSDVSHLVV.

The first 26 residues, 1-26 (MAVAGFVFCWPLLGLTIVLLVAPIDA), serve as a signal peptide directing secretion. Residues 27-573 (AQRHTASDNP…TLVSFLQPFS (547 aa)) lie on the Extracellular side of the membrane. N258, N314, N345, N397, N454, N481, and N501 each carry an N-linked (GlcNAc...) asparagine glycan. Residues 530–532 (PLT) and R537 contribute to the glycine site. The helical transmembrane segment at 574 to 594 (NTLWILVMVSVHVVALVLYLL) threads the bilayer. Over 595–651 (DRFSPFGRFKLSHSDSNEEKALNLSSAVWFAWGVLLNSGIGEGTPRSFSARVLGMVW) the chain is Cytoplasmic. Residues 652-672 (AGFAMIIVASYTANLAAFLVL) form a helical membrane-spanning segment. Residues 673 to 831 (ERPKTKLSGI…KTPNTLGLKN (159 aa)) lie on the Extracellular side of the membrane. N693 carries N-linked (GlcNAc...) asparagine glycosylation. S703 and D747 together coordinate glycine. The helical transmembrane segment at 832–852 (MAGVFILVGVGIAGGVGLIII) threads the bilayer. Topologically, residues 853 to 997 (EVIYKKHQVK…YTSDVSHLVV (145 aa)) are cytoplasmic. The tract at residues 970–997 (LGKTRPQQSVLPPRYSPGYTSDVSHLVV) is disordered. Polar residues predominate over residues 987–997 (GYTSDVSHLVV).

It belongs to the glutamate-gated ion channel (TC 1.A.10.1) family. Forms a heteromeric NMDA channel with Nmdar2.

It is found in the cell membrane. The protein localises to the postsynaptic cell membrane. Its subcellular location is the postsynaptic density. Its function is as follows. NMDA receptor subtype of glutamate-gated ion channels with high calcium permeability and voltage-dependent sensitivity to magnesium. Mediated by glycine. This protein plays a key role in synaptic plasticity, synaptogenesis, excitotoxicity, memory acquisition and learning. It mediates neuronal functions in glutamate neurotransmission. Is involved in the cell surface targeting of NMDA receptors. Plays a role in associative learning and in long-term memory consolidation. This is Glutamate [NMDA] receptor subunit 1 from Drosophila yakuba (Fruit fly).